A 277-amino-acid chain; its full sequence is Insulin-induced gene 1 protein (277 aa).

Residues 1 to 84 (MPRLHDHFWS…PYPNTWHHRL (84 aa)) lie on the Cytoplasmic side of the membrane. The segment covering 51 to 66 (HGAPDADPAPRGRSAA) has biased composition (low complexity). Residues 51 to 73 (HGAPDADPAPRGRSAAMSGPEPG) are disordered. The chain crosses the membrane as a helical span at residues 85 to 107 (LQRSLVLFSVGVVLALVLNLLQI). At 108 to 126 (QRNVTLFPEEVIATIFSSA) the chain is on the lumenal side. The helical transmembrane segment at 127-144 (WWVPPCCGTAAAVVGLLY) threads the bilayer. Over 145 to 159 (PCIDSHLGEPHKFKR) the chain is Cytoplasmic. Glycyl lysine isopeptide (Lys-Gly) (interchain with G-Cter in ubiquitin) cross-links involve residues Lys-156 and Lys-158. A helical membrane pass occupies residues 160–182 (EWASVMRCIAVFVGINHASAKLD). Topologically, residues 183-185 (FAN) are lumenal. A helical transmembrane segment spans residues 186–204 (NVQLSLTLAALSLGLWWTF). The Cytoplasmic portion of the chain corresponds to 205–209 (DRSRS). Residue Ser-207 is modified to Phosphoserine; by PCK1. Residues 210 to 231 (GLGLGITIAFLATLITQFLVYN) traverse the membrane as a helical segment. Residues 232 to 245 (GVYQYTSPDFLYIR) are Lumenal-facing. Residues 246 to 263 (SWLPCIFFSGGVTVGNIG) form a helical membrane-spanning segment. Residues 264 to 277 (RQLAMGVPEKPHSD) are Cytoplasmic-facing. The KxHxx signature appears at 271-277 (PEKPHSD).

The protein belongs to the INSIG family. As to quaternary structure, interacts with SCAP; interaction is direct and only takes place in the presence of sterols; it prevents interaction between SCAP and the coat protein complex II (COPII). Associates with the SCAP-SREBP complex (composed of SCAP and SREBF1/SREBP1 or SREBF2/SREBP2); association is mediated via its interaction with SCAP and only takes place in the presence of sterols. Interaction with SCAP is mutually exclusive with PAQR3. Interacts with HMGCR (via its SSD); the interaction, accelerated by sterols, leads to the recruitment of HMGCR to AMFR/gp78 for its ubiquitination by the sterol-mediated ERAD pathway. Interacts with AMFR/gp78 (via its membrane domain); the interaction recruits HMCR at the ER membrane for its ubiquitination and degradation by the sterol-mediated ERAD pathway. Interacts with SOAT2/ACAT2; leading to promote recruitment of AMFR/gp78 and subsequent ubiquitination of SOAT2/ACAT2. Interacts with RNF139. Interacts with RNF145. Phosphorylation at Ser-207 by PCK1 reduces binding to oxysterol, disrupting the interaction between INSIG1 and SCAP, thereby promoting nuclear translocation of SREBP proteins (SREBF1/SREBP1 or SREBF2/SREBP2) and subsequent transcription of downstream lipogenesis-related genes. Post-translationally, ubiquitinated by AMFR/gp78 in response to sterol deprivation, leading to its degradation: when the SCAP-SREBP complex becomes dissociated from INSIG1, INSIG1 is then ubiquitinated and degraded in proteasomes. Although ubiquitination is required for rapid INSIG1 degradation, it is not required for release of the SCAP-SREBP complex. Ubiquitinated by RNF139. In terms of tissue distribution, expressed in all tissues tested with highest expression in the liver.

Its subcellular location is the endoplasmic reticulum membrane. Its function is as follows. Oxysterol-binding protein that mediates feedback control of cholesterol synthesis by controlling both endoplasmic reticulum to Golgi transport of SCAP and degradation of HMGCR. Acts as a negative regulator of cholesterol biosynthesis by mediating the retention of the SCAP-SREBP complex in the endoplasmic reticulum, thereby blocking the processing of sterol regulatory element-binding proteins (SREBPs) SREBF1/SREBP1 and SREBF2/SREBP2. Binds oxysterol, including 25-hydroxycholesterol, regulating interaction with SCAP and retention of the SCAP-SREBP complex in the endoplasmic reticulum. In presence of oxysterol, interacts with SCAP, retaining the SCAP-SREBP complex in the endoplasmic reticulum, thereby preventing SCAP from escorting SREBF1/SREBP1 and SREBF2/SREBP2 to the Golgi. Sterol deprivation or phosphorylation by PCK1 reduce oxysterol-binding, disrupting the interaction between INSIG1 and SCAP, thereby promoting Golgi transport of the SCAP-SREBP complex, followed by processing and nuclear translocation of SREBF1/SREBP1 and SREBF2/SREBP2. Also regulates cholesterol synthesis by regulating degradation of HMGCR: initiates the sterol-mediated ubiquitin-mediated endoplasmic reticulum-associated degradation (ERAD) of HMGCR via recruitment of the reductase to the ubiquitin ligases AMFR/gp78 and/or RNF139. Also regulates degradation of SOAT2/ACAT2 when the lipid levels are low: initiates the ubiquitin-mediated degradation of SOAT2/ACAT2 via recruitment of the ubiquitin ligases AMFR/gp78. The sequence is that of Insulin-induced gene 1 protein from Homo sapiens (Human).